Reading from the N-terminus, the 312-residue chain is Malate dehydrogenase (312 aa).

NAD(+)-binding positions include 12 to 17 (GAGFTG) and Asp-36. 2 residues coordinate substrate: Arg-87 and Arg-93. NAD(+) contacts are provided by residues Asn-100 and 123–125 (LTN). Asn-125 provides a ligand contact to substrate. Ser-149 is modified (phosphoserine). Residue Arg-156 participates in substrate binding. The active-site Proton acceptor is the His-180.

The protein belongs to the LDH/MDH superfamily. MDH type 3 family.

It catalyses the reaction (S)-malate + NAD(+) = oxaloacetate + NADH + H(+). Functionally, catalyzes the reversible oxidation of malate to oxaloacetate. The chain is Malate dehydrogenase from Geobacillus thermodenitrificans (strain NG80-2).